The chain runs to 214 residues: UPF0056 membrane protein aq_540 (214 aa).

6 helical membrane-spanning segments follow: residues 17 to 37 (FLSLLAIMNPFSSVPVVISLM), 47 to 67 (VIALKASVYAFFILTFFLISG), 73 to 93 (FMGITLPAFKVGGGILLFLIA), 122 to 142 (LIPLAMPLLAGPGSITTVLVL), 153 to 173 (VALFCAIFLSSFTAFVVYSLS), and 185 to 205 (INLITRISGILLLAISVQFVV).

This sequence belongs to the UPF0056 (MarC) family.

It localises to the cell membrane. The protein is UPF0056 membrane protein aq_540 of Aquifex aeolicus (strain VF5).